We begin with the raw amino-acid sequence, 106 residues long: Small ribosomal subunit protein uS10 (106 aa).

It belongs to the universal ribosomal protein uS10 family. As to quaternary structure, part of the 30S ribosomal subunit.

Involved in the binding of tRNA to the ribosomes. The polypeptide is Small ribosomal subunit protein uS10 (Pyrobaculum islandicum (strain DSM 4184 / JCM 9189 / GEO3)).